We begin with the raw amino-acid sequence, 416 residues long: Mitochondrial inner membrane i-AAA protease complex subunit MGR1 (416 aa).

Residues 1–28 are disordered; that stretch reads MAVFTPPSGNSNSTDHTHTQDDHDKDDN. Residues 1–56 lie on the Mitochondrial intermembrane side of the membrane; it reads MAVFTPPSGNSNSTDHTHTQDDHDKDDNDIKKFYIRPSLGLKLWGPLVPAPDNLPG. Basic and acidic residues predominate over residues 15–28; sequence DHTHTQDDHDKDDN. A helical membrane pass occupies residues 57–73; that stretch reads LYTLITIQSAVGFFALW. The Mitochondrial matrix segment spans residues 74-151; the sequence is RLRRLYKLPP…RQSRFVSVRK (78 aa). A helical membrane pass occupies residues 152–169; that stretch reads LLWGLFGSLLLSQSLLEL. At 170 to 416 the chain is on the mitochondrial intermembrane side; the sequence is TRLNFLKYDP…PKALTNEKTH (247 aa). Residues 390 to 400 show a composition bias toward polar residues; it reads SHTKTPTSTDQ. A disordered region spans residues 390–416; it reads SHTKTPTSTDQPLPGPTPKALTNEKTH.

Belongs to the MGR1 family. In terms of assembly, component of the mitochondrial inner membrane i-AAA protease complex composed of at least MRG1 and YME1. Interacts directly with YME1.

Its subcellular location is the mitochondrion inner membrane. Its function is as follows. Component of the mitochondrial inner membrane i-AAA protease complex required for mitochondrial inner membrane protein turnover. Required for growth of cells lacking the mitochondrial genome. This Saccharomyces cerevisiae (strain YJM789) (Baker's yeast) protein is Mitochondrial inner membrane i-AAA protease complex subunit MGR1 (MGR1).